The primary structure comprises 686 residues: Leucine-rich repeat-containing protein 49 (686 aa).

7 LRR repeats span residues 113-134, 135-156, 157-178, 179-200, 201-222, 223-244, and 245-266; these read HLRL…SNLQ, KLIS…STLR, CLRV…ENLK, SLDV…NHLC, ELRV…NGLD, SLTE…DNLP, and CLQH…SCLA. Residues 279-317 form the LRRCT domain; sequence NPIAQESWYKHTVLQNMMQLRQLDMKRITEEERRMASVL. A coiled-coil region spans residues 303 to 341; the sequence is MKRITEEERRMASVLAKKEEEKKRESHKQSLLKEKKRLT. The interval 360–388 is disordered; it reads ATNEDRKDSDSPQDPCQIDGSTLSAFPEE.

In terms of assembly, part of the neuronal tubulin polyglutamylase complex which contains TPGS1, TPGS2, TTLL1, LRRC49 and NICN1. Interacts with PCM1; TTLL1, TPGS1, TPGS2 and LRRC49.

The protein resides in the cytoplasm. The protein localises to the cytoskeleton. Its subcellular location is the microtubule organizing center. It is found in the centrosome. It localises to the centriolar satellite. In terms of biological role, subunit of the tubulin polyglutamylase complex (TPGC). The complex mediates cilia and flagella polyglutamylation which is essential for their biogenesis and motility. In Homo sapiens (Human), this protein is Leucine-rich repeat-containing protein 49.